Reading from the N-terminus, the 124-residue chain is MATTNQLIRKGRKTIKEKSKVPALEACPQRRGVCTRVYTTTPKKPNSAMRKVCRVRLTSGYEVSSYIGGEGHNLQEHSVVLIRGGRVKDLPGVRYHTVRGALDCAGVKDRKQGRSKYGAKKPKV.

Aspartate 89 bears the 3-methylthioaspartic acid mark.

This sequence belongs to the universal ribosomal protein uS12 family. In terms of assembly, part of the 30S ribosomal subunit. Contacts proteins S8 and S17. May interact with IF1 in the 30S initiation complex.

In terms of biological role, with S4 and S5 plays an important role in translational accuracy. Functionally, interacts with and stabilizes bases of the 16S rRNA that are involved in tRNA selection in the A site and with the mRNA backbone. Located at the interface of the 30S and 50S subunits, it traverses the body of the 30S subunit contacting proteins on the other side and probably holding the rRNA structure together. The combined cluster of proteins S8, S12 and S17 appears to hold together the shoulder and platform of the 30S subunit. The chain is Small ribosomal subunit protein uS12 from Psychrobacter arcticus (strain DSM 17307 / VKM B-2377 / 273-4).